The primary structure comprises 235 residues: Leucyl/phenylalanyl-tRNA--protein transferase (235 aa).

Belongs to the L/F-transferase family.

Its subcellular location is the cytoplasm. It carries out the reaction N-terminal L-lysyl-[protein] + L-leucyl-tRNA(Leu) = N-terminal L-leucyl-L-lysyl-[protein] + tRNA(Leu) + H(+). The enzyme catalyses N-terminal L-arginyl-[protein] + L-leucyl-tRNA(Leu) = N-terminal L-leucyl-L-arginyl-[protein] + tRNA(Leu) + H(+). It catalyses the reaction L-phenylalanyl-tRNA(Phe) + an N-terminal L-alpha-aminoacyl-[protein] = an N-terminal L-phenylalanyl-L-alpha-aminoacyl-[protein] + tRNA(Phe). In terms of biological role, functions in the N-end rule pathway of protein degradation where it conjugates Leu, Phe and, less efficiently, Met from aminoacyl-tRNAs to the N-termini of proteins containing an N-terminal arginine or lysine. The chain is Leucyl/phenylalanyl-tRNA--protein transferase from Anaeromyxobacter sp. (strain Fw109-5).